The following is a 262-amino-acid chain: Phosphonates import ATP-binding protein PhnC (262 aa).

One can recognise an ABC transporter domain in the interval 5-253 (IRVEKLAKTF…RFDHLYRSIN (249 aa)). 37 to 44 (GPSGSGKS) provides a ligand contact to ATP.

It belongs to the ABC transporter superfamily. Phosphonates importer (TC 3.A.1.9.1) family. As to quaternary structure, the complex is composed of two ATP-binding proteins (PhnC), two transmembrane proteins (PhnE) and a solute-binding protein (PhnD).

It localises to the cell inner membrane. The enzyme catalyses phosphonate(out) + ATP + H2O = phosphonate(in) + ADP + phosphate + H(+). Part of the ABC transporter complex PhnCDE involved in phosphonates import. Responsible for energy coupling to the transport system. The protein is Phosphonates import ATP-binding protein PhnC of Escherichia coli (strain UTI89 / UPEC).